Consider the following 411-residue polypeptide: Alpha-N-acetylgalactosaminidase (411 aa).

The first 17 residues, 1-17 (MLLKTVLLLGHVAQVLM), serve as a signal peptide directing secretion. Disulfide bonds link cysteine 38-cysteine 80 and cysteine 42-cysteine 49. Substrate is bound at residue 78–79 (DD). Residue asparagine 124 is glycosylated (N-linked (GlcNAc...) asparagine). A disulfide bond links cysteine 127 and cysteine 158. Lysine 154 contacts substrate. Aspartate 156 functions as the Nucleophile in the catalytic mechanism. A glycan (N-linked (GlcNAc...) asparagine) is linked at asparagine 177. Cysteine 187 and cysteine 209 form a disulfide bridge. Serine 188 serves as a coordination point for substrate. A glycan (N-linked (GlcNAc...) asparagine) is linked at asparagine 201. Arginine 213 and aspartate 217 together coordinate substrate. The active-site Proton donor is aspartate 217. 2 positions are modified to phosphoserine: serine 322 and serine 332. N-linked (GlcNAc...) asparagine glycans are attached at residues asparagine 359 and asparagine 385.

Belongs to the glycosyl hydrolase 27 family. In terms of assembly, homodimer.

It is found in the lysosome. The catalysed reaction is Cleavage of non-reducing alpha-(1-&gt;3)-N-acetylgalactosamine residues from human blood group A and AB mucin glycoproteins, Forssman hapten and blood group A lacto series glycolipids.. The enzyme catalyses a neolactoside IV(3)-alpha-GalNAc,IV(2)-alpha-Fuc-nLc4Cer(d18:1(4E)) + H2O = a neolactoside IV(2)-alpha-Fuc-nLc4Cer(d18:1(4E)) + N-acetyl-alpha-D-galactosamine. It carries out the reaction a neolactoside IV(3)-alpha-GalNAc,IV(2)-alpha-Fuc-nLc4Cer(d18:0) + H2O = a neolactoside IV(2)-alpha-Fuc-nLc4Cer(d18:0) + N-acetyl-alpha-D-galactosamine. It catalyses the reaction a globoside IV3GalNAc-Gb4Cer + H2O = N-acetyl-alpha-D-galactosamine + a globoside Gb4Cer. Removes terminal alpha-N-acetylgalactosamine residues from glycolipids and glycopeptides. Required for the breakdown of glycolipids. The protein is Alpha-N-acetylgalactosaminidase of Homo sapiens (Human).